Here is a 403-residue protein sequence, read N- to C-terminus: G2/mitotic-specific cyclin-B1 (403 aa).

It belongs to the cyclin family. Cyclin AB subfamily. As to quaternary structure, interacts with the CDC2 protein kinase to form a serine/threonine kinase holoenzyme complex also known as maturation promoting factor (MPF). The cyclin subunit imparts substrate specificity to the complex.

In terms of biological role, essential for the control of the cell cycle at the G2/M (mitosis) transition. The chain is G2/mitotic-specific cyclin-B1 (ccnb1) from Anguilla japonica (Japanese eel).